The following is a 270-amino-acid chain: Regulatory protein RecX (270 aa).

The protein belongs to the RecX family.

The protein localises to the cytoplasm. Modulates RecA activity. This chain is Regulatory protein RecX, found in Bacillus cereus (strain G9842).